A 441-amino-acid polypeptide reads, in one-letter code: GTPase Der (441 aa).

2 consecutive EngA-type G domains span residues Pro3–Thr167 and Thr176–Ala351. GTP-binding positions include Gly9–Ser16, Asp56–Phe60, Asn119–Asp122, Gly182–Ser189, Asp229–Ile233, and Asn294–Asp297. The KH-like domain maps to Lys352–Glu436.

This sequence belongs to the TRAFAC class TrmE-Era-EngA-EngB-Septin-like GTPase superfamily. EngA (Der) GTPase family. Associates with the 50S ribosomal subunit.

In terms of biological role, GTPase that plays an essential role in the late steps of ribosome biogenesis. This chain is GTPase Der, found in Geotalea daltonii (strain DSM 22248 / JCM 15807 / FRC-32) (Geobacter daltonii).